Reading from the N-terminus, the 46-residue chain is Mu-segestritoxin-Sf1f (46 aa).

4 cysteine pairs are disulfide-bonded: Cys-3-Cys-19, Cys-10-Cys-22, Cys-18-Cys-42, and Cys-24-Cys-40. The tract at residues 31-33 (RPW) is keys region for toxin activity.

The protein belongs to the neurotoxin 16 (SFI) family. Expressed by the venom gland.

The protein resides in the secreted. Its function is as follows. Insecticidal toxin. It inhibits insect voltage-gated sodium channels (Nav) by partially blocking the channel pore in DUM neurons from the American cockroach, not by acting as a gating modifier. The inhibition is only partially reversible after prolonged washout. In vivo, the toxin causes flaccid paralysis followed by death when injected into Heliothis virescens larvae. It also causes uncoordinated movements followed by full paralysis to sheep blowflies (Lucilia cuprina). When the toxin is fused to snowdrop lectin, it is orally active against larvae of the tomato moth (Laconobia oleracea), the rice brown planthopper (Nilaparvata lugens), and the peach-potato aphid (Myzus persicae). The chain is Mu-segestritoxin-Sf1f from Segestria florentina (Tube-web spider).